A 91-amino-acid polypeptide reads, in one-letter code: Small ribosomal subunit protein bS20 (91 aa).

Disordered regions lie at residues Met-1 to Lys-26 and His-67 to Ser-91.

This sequence belongs to the bacterial ribosomal protein bS20 family.

In terms of biological role, binds directly to 16S ribosomal RNA. The chain is Small ribosomal subunit protein bS20 from Deinococcus deserti (strain DSM 17065 / CIP 109153 / LMG 22923 / VCD115).